Consider the following 984-residue polypeptide: Shutoff protein (984 aa).

A disordered region spans residues Gly131 to Pro231. Acidic residues predominate over residues Asp137–Pro147. Positions Glu148–Asp159 are enriched in basic and acidic residues. Over residues Val176–Ser186 the composition is skewed to acidic residues. Residues Thr190 to Ala202 show a composition bias toward polar residues. A compositionally biased stretch (basic and acidic residues) spans Asp205–Gly216. The segment at Leu411–Leu476 is binding to host EIF4G. In terms of domain architecture, RRM spans Arg479–Ala597. Disordered stretches follow at residues Gly810–Ala853 and Lys876–Glu984. A Phosphotyrosine; by host modification is found at Tyr812. Residues Ala913–Thr923 are compositionally biased toward basic residues. The segment covering Arg945–Ala958 has biased composition (low complexity).

Belongs to the adenoviridae shutoff protein family. Monomer. Interacts with hexon protein; this interaction allows chaperoning and trimerization of hexon proteins. Interacts (via N-terminus) with host initiation factor EIF4G (via C-terminus). Interacts (via RRM domain) with viral mRNAs that contain the tripartite leader; this interaction allows ribosome shunting and expression of viral late mRNAs. In terms of processing, might be cleaved by the viral protease. Phosphorylated. Tyrosine phosphorylation enhances preferential binding to tripartite leader mRNAs and allows ribosome shunting. Post-translationally, methylated. Asymmetric dimethylation by host PRMT1 of the Arg/Gly-rich region may regulate shutoff protein binding to hexon and promote the capsid assembly in the nucleus.

Its subcellular location is the host cytoplasm. Protein that inhibits host translation while promoting late viral translation by ribosome shunting. Blocks host cap-dependent translation by binding to eIF4G, displacing MKNK1 from cap initiation complexes and preventing EIF4E phosphorylation. Binds to the tripartite leader sequence of viral late mRNAs and recruits host eIF4G, PABPC1/poly-A binding protein and 40S ribosomes subunits on viral mRNAs, allowing ribosome shunting and efficient translation of late viral mRNAs even though conventional translation via ribosome scanning from the cap has been shut off in the host cell. During assembly, acts as a chaperone protein that helps hexon proteins assembly into trimers. In Galliformes (FAdV-1), this protein is Shutoff protein.